A 330-amino-acid chain; its full sequence is Putative [LysW]-L-2-aminoadipate/[LysW]-L-glutamate phosphate reductase (330 aa).

Residue 10 to 13 participates in NADP(+) binding; sequence SGYI. The active site involves cysteine 142. NADP(+) is bound at residue asparagine 297.

The protein belongs to the NAGSA dehydrogenase family. Type 1 subfamily. LysY sub-subfamily.

It is found in the cytoplasm. It carries out the reaction [amino-group carrier protein]-C-terminal-N-(1-carboxy-5-oxopentan-1-yl)-L-glutamine + phosphate + NADP(+) = [amino-group carrier protein]-C-terminal-N-(1-carboxy-5-phosphooxy-5-oxopentan-1-yl)-L-glutamine + NADPH + H(+). It catalyses the reaction [amino-group carrier protein]-C-terminal-gamma-(L-glutamyl-5-semialdehyde)-L-glutamate + phosphate + NADP(+) = [amino-group carrier protein]-C-terminal-gamma-(5-phospho-L-glutamyl)-L-glutamate + NADPH + H(+). Its pathway is amino-acid biosynthesis; L-lysine biosynthesis via AAA pathway; L-lysine from L-alpha-aminoadipate (Thermus route): step 3/5. It functions in the pathway amino-acid biosynthesis; L-arginine biosynthesis. Functionally, involved in both the arginine and lysine biosynthetic pathways. The chain is Putative [LysW]-L-2-aminoadipate/[LysW]-L-glutamate phosphate reductase from Pyrococcus furiosus (strain ATCC 43587 / DSM 3638 / JCM 8422 / Vc1).